The chain runs to 952 residues: Valine--tRNA ligase (952 aa).

The 'HIGH' region signature appears at 42 to 52 (PNVTGSLHMGH). Residues 554–558 (KMSKS) carry the 'KMSKS' region motif. Lys-557 contributes to the ATP binding site. Positions 888 to 952 (AELARLDGEI…EEQKKTIAAL (65 aa)) form a coiled coil.

Belongs to the class-I aminoacyl-tRNA synthetase family. ValS type 1 subfamily. Monomer.

The protein resides in the cytoplasm. It carries out the reaction tRNA(Val) + L-valine + ATP = L-valyl-tRNA(Val) + AMP + diphosphate. Functionally, catalyzes the attachment of valine to tRNA(Val). As ValRS can inadvertently accommodate and process structurally similar amino acids such as threonine, to avoid such errors, it has a 'posttransfer' editing activity that hydrolyzes mischarged Thr-tRNA(Val) in a tRNA-dependent manner. This Vibrio parahaemolyticus serotype O3:K6 (strain RIMD 2210633) protein is Valine--tRNA ligase.